The following is a 311-amino-acid chain: Cytosolic Fe-S cluster assembly factor Nubp1 homolog (311 aa).

The disordered stretch occupies residues 1–20; sequence MQAPPPEHCPGVESENAGKG. 4 residues coordinate [4Fe-4S] cluster: Cys9, Cys23, Cys26, and Cys32. 63–70 contributes to the ATP binding site; sequence GKGGVGKS. The [4Fe-4S] cluster site is built by Cys240 and Cys243.

Belongs to the Mrp/NBP35 ATP-binding proteins family. NUBP1/NBP35 subfamily. As to quaternary structure, heterotetramer of 2 Nubp1 and 2 Nubp2 chains. The cofactor is [4Fe-4S] cluster.

It localises to the cytoplasm. Functionally, component of the cytosolic iron-sulfur (Fe/S) protein assembly (CIA) machinery. Required for maturation of extramitochondrial Fe-S proteins. The Nubp1-Nubp2 heterotetramer forms a Fe-S scaffold complex, mediating the de novo assembly of an Fe-S cluster and its transfer to target apoproteins. The protein is Cytosolic Fe-S cluster assembly factor Nubp1 homolog of Drosophila simulans (Fruit fly).